Here is a 218-residue protein sequence, read N- to C-terminus: 3,4-dihydroxy-2-butanone 4-phosphate synthase (218 aa).

Residues 38-39, aspartate 43, 151-155, and glutamate 175 each bind D-ribulose 5-phosphate; these read RE and RRGHT. Position 39 (glutamate 39) interacts with Mg(2+). Histidine 154 lines the Mg(2+) pocket.

Belongs to the DHBP synthase family. As to quaternary structure, homodimer. It depends on Mg(2+) as a cofactor. The cofactor is Mn(2+).

It carries out the reaction D-ribulose 5-phosphate = (2S)-2-hydroxy-3-oxobutyl phosphate + formate + H(+). It functions in the pathway cofactor biosynthesis; riboflavin biosynthesis; 2-hydroxy-3-oxobutyl phosphate from D-ribulose 5-phosphate: step 1/1. Functionally, catalyzes the conversion of D-ribulose 5-phosphate to formate and 3,4-dihydroxy-2-butanone 4-phosphate. The polypeptide is 3,4-dihydroxy-2-butanone 4-phosphate synthase (Vibrio cholerae serotype O1 (strain M66-2)).